The sequence spans 558 residues: Xylulose kinase 2 (558 aa).

Substrate-binding positions include Asp-16, 20–23 (QSMK), Ser-111, and Asp-283. ATP-binding positions include Thr-305 and 456-460 (GASAN).

It belongs to the FGGY kinase family. A divalent metal cation is required as a cofactor.

It is found in the cytoplasm. The catalysed reaction is D-xylulose + ATP = D-xylulose 5-phosphate + ADP + H(+). The protein operates within isoprenoid biosynthesis; carotenoid biosynthesis. With respect to regulation, repressed by oxo-clomazone (keto-clomazone), a bleaching herbicide. In terms of biological role, mediates 1-deoxy-D-xylulose (DX) phosphorylation in the cytoplasm prior to the translocation of 1-deoxy-D-xylulose 5-phosphate into plastids. Can also phosphorylate D-xylulose (Xyl). Uses preferentially ATP as cosubstrate. In Arabidopsis thaliana (Mouse-ear cress), this protein is Xylulose kinase 2.